The chain runs to 93 residues: Large ribosomal subunit protein eL29 (93 aa).

Residues 1–31 are compositionally biased toward basic residues; the sequence is MAKSKNHSTHHKNRKDHRNGIKKAVVHKKTS. The tract at residues 1–33 is disordered; it reads MAKSKNHSTHHKNRKDHRNGIKKAVVHKKTSSK.

This sequence belongs to the eukaryotic ribosomal protein eL29 family.

In Dictyostelium discoideum (Social amoeba), this protein is Large ribosomal subunit protein eL29 (rpl29).